The sequence spans 437 residues: UDP-N-acetylmuramate--L-alanine ligase (437 aa).

108-114 contributes to the ATP binding site; that stretch reads GAHGKTS.

Belongs to the MurCDEF family.

Its subcellular location is the cytoplasm. The catalysed reaction is UDP-N-acetyl-alpha-D-muramate + L-alanine + ATP = UDP-N-acetyl-alpha-D-muramoyl-L-alanine + ADP + phosphate + H(+). Its pathway is cell wall biogenesis; peptidoglycan biosynthesis. In terms of biological role, cell wall formation. This is UDP-N-acetylmuramate--L-alanine ligase from Staphylococcus saprophyticus subsp. saprophyticus (strain ATCC 15305 / DSM 20229 / NCIMB 8711 / NCTC 7292 / S-41).